A 409-amino-acid chain; its full sequence is Glutamate--tRNA ligase 2 (409 aa).

The short motif at 9-19 (PSPTGNLHIGG) is the 'HIGH' region element. The short motif at 198–202 (KLSKR) is the 'KMSKS' region element. K201 contacts ATP.

It belongs to the class-I aminoacyl-tRNA synthetase family. Glutamate--tRNA ligase type 1 subfamily. As to quaternary structure, monomer.

The protein localises to the cytoplasm. It catalyses the reaction tRNA(Glu) + L-glutamate + ATP = L-glutamyl-tRNA(Glu) + AMP + diphosphate. Functionally, catalyzes the attachment of glutamate to tRNA(Glu) in a two-step reaction: glutamate is first activated by ATP to form Glu-AMP and then transferred to the acceptor end of tRNA(Glu). The protein is Glutamate--tRNA ligase 2 of Neorickettsia sennetsu (strain ATCC VR-367 / Miyayama) (Ehrlichia sennetsu).